The following is a 157-amino-acid chain: Cell cycle control protein 50C (157 aa).

At 1–34 (MEERAQHCLSRLLDNSALKQQELPIHRLYFTARR) the chain is on the cytoplasmic side. A helical transmembrane segment spans residues 35–55 (VLFVFFATGIFCLCMGIILIL). The Extracellular portion of the chain corresponds to 56–157 (SARSTQEIEI…LFLNQVDFSV (102 aa)). N-linked (GlcNAc...) asparagine glycosylation occurs at Asn66.

It belongs to the CDC50/LEM3 family.

The protein localises to the membrane. The protein is Cell cycle control protein 50C (TMEM30C) of Pan troglodytes (Chimpanzee).